Consider the following 466-residue polypeptide: Muscarinic acetylcholine receptor M2 (466 aa).

At Met-1–Glu-25 the chain is on the extracellular side. Asn-2, Asn-3, and Asn-8 each carry an N-linked (GlcNAc...) asparagine glycan. Residues Val-26–Met-48 traverse the membrane as a helical segment. At Val-49–Asn-62 the chain is on the cytoplasmic side. The chain crosses the membrane as a helical span at residues Tyr-63–Tyr-83. The Extracellular segment spans residues Thr-84 to Asp-100. The cysteines at positions 99 and 179 are disulfide-linked. The chain crosses the membrane as a helical span at residues Leu-101 to Phe-122. An Important for signaling motif is present at residues Asp-123–Tyr-125. The Cytoplasmic segment spans residues Asp-123–Met-142. A helical transmembrane segment spans residues Ala-143–Trp-165. At Gln-166–Pro-187 the chain is on the extracellular side. The helical transmembrane segment at Ala-188–Ile-212 threads the bilayer. At Ser-213–Arg-387 the chain is on the cytoplasmic side. Disordered stretches follow at residues Gly-223–Asn-265 and Gln-279–Gln-315. Polar residues-rich tracts occupy residues Ala-228–Leu-238 and Pro-246–Asp-256. The span at Asn-287–Asn-298 shows a compositional bias: low complexity. A helical membrane pass occupies residues Thr-388–Asn-410. Residues Ser-411–Pro-418 lie on the Extracellular side of the membrane. A disulfide bridge links Cys-413 with Cys-416. Residues Gly-419–Leu-442 form a helical membrane-spanning segment. Positions Asn-436–Tyr-440 match the Important for signaling motif. The Cytoplasmic segment spans residues Cys-443–Arg-466. Thr-446, Thr-450, and Thr-465 each carry phosphothreonine.

Belongs to the G-protein coupled receptor 1 family. Muscarinic acetylcholine receptor subfamily. CHRM2 sub-subfamily.

The protein localises to the cell membrane. It is found in the postsynaptic cell membrane. In terms of biological role, the muscarinic acetylcholine receptor mediates various cellular responses, including inhibition of adenylate cyclase, breakdown of phosphoinositides and modulation of potassium channels through the action of G proteins. Primary transducing effect is adenylate cyclase inhibition. Signaling promotes phospholipase C activity, leading to the release of inositol trisphosphate (IP3); this then triggers calcium ion release into the cytosol. The chain is Muscarinic acetylcholine receptor M2 (CHRM2) from Gallus gallus (Chicken).